A 448-amino-acid polypeptide reads, in one-letter code: ATP-dependent protease ATPase subunit HslU (448 aa).

Residues V21, 63–68, D260, E326, and R398 each bind ATP; that span reads GVGKTE.

The protein belongs to the ClpX chaperone family. HslU subfamily. A double ring-shaped homohexamer of HslV is capped on each side by a ring-shaped HslU homohexamer. The assembly of the HslU/HslV complex is dependent on binding of ATP.

The protein resides in the cytoplasm. Its function is as follows. ATPase subunit of a proteasome-like degradation complex; this subunit has chaperone activity. The binding of ATP and its subsequent hydrolysis by HslU are essential for unfolding of protein substrates subsequently hydrolyzed by HslV. HslU recognizes the N-terminal part of its protein substrates and unfolds these before they are guided to HslV for hydrolysis. This is ATP-dependent protease ATPase subunit HslU from Sulfurihydrogenibium sp. (strain YO3AOP1).